We begin with the raw amino-acid sequence, 202 residues long: Neurensin-2 (202 aa).

2 helical membrane passes run 65 to 85 and 116 to 136; these read VAVA…GYAV and VVGA…LFLI. The segment at 162-202 is disordered; sequence RDEPEKLSPAFHETSSQSPFLTPPSPFGQQSVQTSQPQRDL. Positions 188–202 are enriched in polar residues; that stretch reads FGQQSVQTSQPQRDL.

The protein belongs to the VMP family. As to expression, expressed specifically in brain where it is widely expressed, with highest levels of expression in thalamus and hypothalamus. In brain, found in neural cell bodies and detected in many regions of the limbic system, such as the septum nucleus, horizontal and vertical limbs of the diagonal band, hippocampus, amygdaloid nucleus, and habernula nucleus. Also localizes to small vesicles found in the perinuclear region of Neuro2a and PC12 cells.

It is found in the membrane. In terms of biological role, may play a role in maintenance and/or transport of vesicles. In Mus musculus (Mouse), this protein is Neurensin-2.